We begin with the raw amino-acid sequence, 585 residues long: Frizzled-5 (585 aa).

A signal peptide spans 1–26 (MARPDPSAPPSLLLLLLAQLVGRAAA). Residues 27–238 (ASKAPVCQEI…ADERTFATFW (212 aa)) are Extracellular-facing. The FZ domain occupies 28-150 (SKAPVCQEIT…RDAEVLCMDY (123 aa)). Cystine bridges form between cysteine 33–cysteine 94, cysteine 41–cysteine 87, cysteine 78–cysteine 116, cysteine 105–cysteine 147, and cysteine 109–cysteine 133. Residue asparagine 47 is glycosylated (N-linked (GlcNAc...) asparagine). An N-linked (GlcNAc...) asparagine glycan is attached at asparagine 151. Residues 156–179 (TTAPPRPFPAKPTLPGPPGAPASG) are disordered. Over residues 159–175 (PPRPFPAKPTLPGPPGA) the composition is skewed to pro residues. A helical transmembrane segment spans residues 239 to 259 (IGLWSVLCFISTSTTVATFLI). The Cytoplasmic segment spans residues 260–270 (DMERFRYPERP). A helical membrane pass occupies residues 271–291 (IIFLSACYLCVSLGFLVRLVV). The Extracellular portion of the chain corresponds to 292–315 (GHASVACSREHNHIHYETTGPALC). A helical membrane pass occupies residues 316 to 336 (TIVFLLVYFFGMASSIWWVIL). At 337-358 (SLTWFLAAGMKWGNEAIAGYAQ) the chain is on the cytoplasmic side. Residues 359–379 (YFHLAAWLIPSVKSITALALS) form a helical membrane-spanning segment. The Extracellular segment spans residues 380-402 (SVDGDPVAGICYVGNQNLNSLRG). The helical transmembrane segment at 403–423 (FVLGPLVLYLLVGTLFLLAGF) threads the bilayer. Topologically, residues 424 to 449 (VSLFRIRSVIKQGGTKTDKLEKLMIR) are cytoplasmic. Residues 450–470 (IGIFTLLYTVPASIVVACYLY) traverse the membrane as a helical segment. Over 471–500 (EQHYRESWEAALTCACPGHDTGQPRAKPEY) the chain is Extracellular. A helical membrane pass occupies residues 501–521 (WVLMLKYFMCLVVGITSGVWI). Topologically, residues 522–585 (WSGKTVESWR…YHKQVSLSHV (64 aa)) are cytoplasmic. The Lys-Thr-X-X-X-Trp motif, mediates interaction with the PDZ domain of Dvl family members signature appears at 525-530 (KTVESW). The short motif at 583–585 (SHV) is the PDZ-binding element.

Belongs to the G-protein coupled receptor Fz/Smo family. As to quaternary structure, binding of unsaturated fatty acid molecules (via FZ domain) promotes homodimerization. Interacts with WNT2B. Interacts with WNT3A. Interacts with WNT7A. Interacts with GOPC. Ubiquitinated by RNF43 and ZNRF3, leading to its degradation by the proteasome.

Its subcellular location is the cell membrane. It is found in the golgi apparatus membrane. The protein resides in the synapse. It localises to the perikaryon. The protein localises to the cell projection. Its subcellular location is the dendrite. It is found in the axon. Receptor for Wnt proteins. Functions in the canonical Wnt/beta-catenin signaling pathway. In vitro activates WNT2, WNT10B, WNT5A, but not WNT2B or WNT4 signaling. In neurons, activation by WNT7A promotes formation of synapses. May be involved in transduction and intercellular transmission of polarity information during tissue morphogenesis and/or in differentiated tissues. Plays a role in yolk sac angiogenesis and in placental vascularization. Plays a role in ocular development. The sequence is that of Frizzled-5 (FZD5) from Homo sapiens (Human).